Reading from the N-terminus, the 162-residue chain is Protein S40-4 (162 aa).

Belongs to the senescence regulator S40 family.

The protein resides in the cytoplasm. The protein is Protein S40-4 of Arabidopsis thaliana (Mouse-ear cress).